The sequence spans 91 residues: MDEVKYPVLTEKSIRLLERNQYTFNVDSQLNKTKMKIWIEHFFDVKVIAMNSYRLPEKGGKGGSMIGHPIRCKRMIITLKPGDSIPLFSEQ.

Belongs to the universal ribosomal protein uL23 family. In terms of assembly, part of the 50S ribosomal subunit.

The protein localises to the plastid. It is found in the chloroplast. Functionally, binds to 23S rRNA. The polypeptide is Large ribosomal subunit protein uL23c (rpl23) (Picea abies (Norway spruce)).